Consider the following 436-residue polypeptide: uncharacterized protein (436 aa).

The N-terminal stretch at 1–20 (MKCAVAILLVCLTLQQAAYG) is a signal peptide. Coiled-coil stretches lie at residues 25–87 (EEVK…ALRN), 154–207 (MRKT…NSVE), and 247–329 (ESWG…ASLL). Residues 371–390 (EEEIAPSTEEDGSEELEADS) are compositionally biased toward acidic residues. A disordered region spans residues 371–419 (EEEIAPSTEEDGSEELEADSYDSKVGGESPISQRTEERQGAEERSRLRR). The segment covering 404–415 (RTEERQGAEERS) has biased composition (basic and acidic residues).

As to expression, component of the acid-insoluble organic matrix of the aragonitic skeleton (at protein level).

It localises to the secreted. This is an uncharacterized protein from Acropora millepora (Staghorn coral).